The following is a 175-amino-acid chain: Apoptosis regulatory protein Siva (175 aa).

Residue Tyr-34 is modified to Phosphotyrosine; by ABL2. The tract at residues 36–55 (QEVFEKTKRLLFLGAQAYLD) is interaction with BCL2L1 isoform Bcl-x(L) and inhibition of BCL2L1 anti-apoptotic activity. Residue Ser-70 is modified to Phosphoserine. The segment at 105–123 (DPSGVASIACSSCVRAVDG) is interaction with coxsackievirus B3 VP2.

Binds through its N-terminal region to the C-terminus of CD27 and to PXMP2/PMP22. Binds to the C-terminus of TNFRSF18/GITR. Isoform 1 binds to BCL2L1/BCLX isoform Bcl-x(L) but not to BAX. In terms of assembly, (Microbial infection) Interacts with coxsackievirus B3 capsid protein VP2; this interaction inhibits the binding of SIVA1 to CD27. Zn(2+) serves as cofactor. Post-translationally, phosphorylated by ABL2/ARG in response to oxidative stress. As to expression, ubiquitous. Mostly expressed in thymus, testis, ovary, prostate, small intestine and spleen and less in colon.

The protein resides in the cytoplasm. It is found in the nucleus. Its function is as follows. Induces CD27-mediated apoptosis. Inhibits BCL2L1 isoform Bcl-x(L) anti-apoptotic activity. Inhibits activation of NF-kappa-B and promotes T-cell receptor-mediated apoptosis. This is Apoptosis regulatory protein Siva (SIVA1) from Homo sapiens (Human).